The following is a 121-amino-acid chain: Type II secretion system protein I (121 aa).

A propeptide spans 1-6 (MNKQKG) (leader sequence). At Met7 the chain carries N-methylmethionine. The helical transmembrane segment at 7–27 (MTLLEVLVALAIFSLAGLTLL) threads the bilayer.

It belongs to the GSP I family. Type II secretion is composed of four main components: the outer membrane complex, the inner membrane complex, the cytoplasmic secretion ATPase and the periplasm-spanning pseudopilus. Interacts with core component PulG. Interacts with pseudopilins PulJ and PulK. Cleaved by prepilin peptidase. In terms of processing, methylated by prepilin peptidase at the amino group of the N-terminal methionine once the leader sequence is cleaved by prepilin peptidase.

It is found in the cell inner membrane. In terms of biological role, component of the type II secretion system required for the energy-dependent secretion of extracellular factors such as proteases and toxins from the periplasm. Part of the pseudopilus tip complex that is critical for the recognition and binding of secretion substrates. In Klebsiella michiganensis (strain ATCC 8724 / DSM 4798 / JCM 20051 / NBRC 3318 / NRRL B-199 / KCTC 1686 / BUCSAV 143 / CCM 1901), this protein is Type II secretion system protein I (pulI).